Reading from the N-terminus, the 62-residue chain is Cryptic Mu-phage protein com (62 aa).

It belongs to the com family.

This is Cryptic Mu-phage protein com from Shigella dysenteriae.